Here is a 468-residue protein sequence, read N- to C-terminus: ATP synthase subunit beta (468 aa).

Position 155-162 (155-162) interacts with ATP; the sequence is GGAGVGKT.

Belongs to the ATPase alpha/beta chains family. In terms of assembly, F-type ATPases have 2 components, CF(1) - the catalytic core - and CF(0) - the membrane proton channel. CF(1) has five subunits: alpha(3), beta(3), gamma(1), delta(1), epsilon(1). CF(0) has three main subunits: a(1), b(2) and c(9-12). The alpha and beta chains form an alternating ring which encloses part of the gamma chain. CF(1) is attached to CF(0) by a central stalk formed by the gamma and epsilon chains, while a peripheral stalk is formed by the delta and b chains.

The protein localises to the cell inner membrane. It carries out the reaction ATP + H2O + 4 H(+)(in) = ADP + phosphate + 5 H(+)(out). Its function is as follows. Produces ATP from ADP in the presence of a proton gradient across the membrane. The catalytic sites are hosted primarily by the beta subunits. In Leptospira biflexa serovar Patoc (strain Patoc 1 / ATCC 23582 / Paris), this protein is ATP synthase subunit beta.